The chain runs to 194 residues: Peptidyl-tRNA hydrolase (194 aa).

Residue Y17 participates in tRNA binding. Residue H22 is the Proton acceptor of the active site. Positions 68, 70, and 116 each coordinate tRNA.

Belongs to the PTH family. As to quaternary structure, monomer.

The protein resides in the cytoplasm. It carries out the reaction an N-acyl-L-alpha-aminoacyl-tRNA + H2O = an N-acyl-L-amino acid + a tRNA + H(+). Its function is as follows. Hydrolyzes ribosome-free peptidyl-tRNAs (with 1 or more amino acids incorporated), which drop off the ribosome during protein synthesis, or as a result of ribosome stalling. Catalyzes the release of premature peptidyl moieties from peptidyl-tRNA molecules trapped in stalled 50S ribosomal subunits, and thus maintains levels of free tRNAs and 50S ribosomes. This is Peptidyl-tRNA hydrolase from Pseudoalteromonas translucida (strain TAC 125).